Here is a 187-residue protein sequence, read N- to C-terminus: Phosphatidylethanolamine-binding protein 1 (187 aa).

At alanine 2 the chain carries N-acetylalanine; in peptide hippocampal cholinergic neurostimulating. Phosphoserine is present on residues serine 6 and serine 13. Position 42 is a phosphothreonine (threonine 42). Phosphoserine occurs at positions 52, 54, 98, and 153. The interaction with RAF1 stretch occupies residues 93–134 (KGNDISSGTVLSEYVGSGPPKDTGLHRYVWLVYEQEQPLNCD).

Belongs to the phosphatidylethanolamine-binding protein family. As to quaternary structure, has a tendency to form dimers by disulfide cross-linking. Interacts with RAF1 and this interaction is enhanced if RAF1 is phosphorylated on residues 'Ser-338', 'Ser-339', 'Tyr-340' and 'Tyr-341'. Interacts with ALOX15; in response to IL13/interleukin-13, prevents the interaction of PEBP1 with RAF1 to activate the ERK signaling cascade. Major component of epididymal secretions and sperm plasma membranes. It is present in cytosols from a variety of other tissues. Highly expressed in brain.

It localises to the cytoplasm. The protein localises to the membrane. Its function is as follows. Binds ATP, opioids and phosphatidylethanolamine. Has lower affinity for phosphatidylinositol and phosphatidylcholine. Serine protease inhibitor which inhibits thrombin, neuropsin and chymotrypsin but not trypsin, tissue type plasminogen activator and elastase. Inhibits the kinase activity of RAF1 by inhibiting its activation and by dissociating the RAF1/MEK complex and acting as a competitive inhibitor of MEK phosphorylation. In terms of biological role, HCNP may be involved in the function of the presynaptic cholinergic neurons of the central nervous system. HCNP increases the production of choline acetyltransferase but not acetylcholinesterase. Seems to be mediated by a specific receptor. This is Phosphatidylethanolamine-binding protein 1 (Pebp1) from Rattus norvegicus (Rat).